Consider the following 53-residue polypeptide: Ovomucoid (53 aa).

The 51-residue stretch at 3–53 (VDCSEYPKPGCMMERLPLCGSDNKTYNDKCNFCNAVVESNGTLTLNHFGEC) folds into the Kazal-like domain. 3 cysteine pairs are disulfide-bonded: C5–C35, C13–C32, and C21–C53. An N-linked (GlcNAc...) asparagine glycan is attached at N42.

It is found in the secreted. The chain is Ovomucoid from Turnix sylvaticus (Common buttonquail).